We begin with the raw amino-acid sequence, 537 residues long: Tyrosine-protein kinase Fyn (537 aa).

Residue Gly-2 is the site of N-myristoyl glycine attachment. Residues Cys-3 and Cys-6 are each lipidated (S-palmitoyl cysteine). Thr-12 carries the phosphothreonine; by PKC modification. Residues 14-35 (LTEERDGSLNQSSGYRYGTDPT) are disordered. Phosphoserine occurs at positions 21 and 26. The 62-residue stretch at 82 to 143 (TGVTLFVALY…PSNYVAPVDS (62 aa)) folds into the SH3 domain. Positions 149 to 246 (WYFGKLGRKD…GLCCRLVVPC (98 aa)) constitute an SH2 domain. Position 185 is a phosphotyrosine (Tyr-185). The Protein kinase domain maps to 271 to 524 (LQLIKRLGNG…YLQGFLEDYF (254 aa)). Residues 277 to 285 (LGNGQFGEV) and Lys-299 each bind ATP. Asp-390 acts as the Proton acceptor in catalysis. Tyr-420 is modified (phosphotyrosine; by autocatalysis). At Tyr-531 the chain carries Phosphotyrosine; by CSK.

The protein belongs to the protein kinase superfamily. Tyr protein kinase family. SRC subfamily. Interacts (via its SH3 domain) with PIK3R1 and PRMT8. Interacts with FYB1, PAG1, and SH2D1A. Interacts with CD79A (tyrosine-phosphorylated form); the interaction increases FYN activity. Interacts (via SH2 domain) with CSF1R (tyrosine phosphorylated). Interacts with TOM1L1 (phosphorylated form). Interacts with KDR (tyrosine phosphorylated). Interacts (via SH3 domain) with KLHL2 (via N-terminus). Interacts with SH2D1A and SLAMF1. Interacts with ITCH; the interaction phosphorylates ITCH and negatively regulates its activity. Interacts with FASLG. Interacts with RUNX3. Interacts with KIT. Interacts with EPHA8; possible downstream effector of EPHA8 in regulation of cell adhesion. Interacts with PTK2/FAK1; this interaction leads to PTK2/FAK1 phosphorylation and activation. Interacts with CAV1; this interaction couples integrins to the Ras-ERK pathway. Interacts with UNC119. Interacts (via SH2 domain) with PTPRH (phosphorylated form). Interacts with PTPRO (phosphorylated form). Interacts with PTPRB (phosphorylated form). Interacts with FYB2. Interacts with DSCAM. Interacts with SKAP1 and FYB1; this interaction promotes the phosphorylation of CLNK. Interacts with NEDD9; in the presence of PTK2. Mn(2+) is required as a cofactor. Autophosphorylated at Tyr-420. Phosphorylation on the C-terminal tail at Tyr-531 by CSK maintains the enzyme in an inactive state. PTPRC/CD45 dephosphorylates Tyr-531 leading to activation. Ultraviolet B (UVB) strongly increase phosphorylation at Thr-12 and kinase activity, and promotes translocation from the cytoplasm to the nucleus. Dephosphorylation at Tyr-420 by PTPN2 negatively regulates T-cell receptor signaling. Phosphorylated at tyrosine residues, which can be enhanced by NTN1. Post-translationally, palmitoylated. Palmitoylation at Cys-3 and Cys-6, probably by ZDHHC21, regulates subcellular location.

Its subcellular location is the cytoplasm. The protein localises to the nucleus. It localises to the cell membrane. The protein resides in the perikaryon. The catalysed reaction is L-tyrosyl-[protein] + ATP = O-phospho-L-tyrosyl-[protein] + ADP + H(+). Its activity is regulated as follows. Inhibited by phosphorylation of Tyr-531 by leukocyte common antigen and activated by dephosphorylation of this site. Its function is as follows. Non-receptor tyrosine-protein kinase that plays a role in many biological processes including regulation of cell growth and survival, cell adhesion, integrin-mediated signaling, cytoskeletal remodeling, cell motility, immune response and axon guidance. Inactive FYN is phosphorylated on its C-terminal tail within the catalytic domain. Following activation by PKA, the protein subsequently associates with PTK2/FAK1, allowing PTK2/FAK1 phosphorylation, activation and targeting to focal adhesions. Involved in the regulation of cell adhesion and motility through phosphorylation of CTNNB1 (beta-catenin) and CTNND1 (delta-catenin). Regulates cytoskeletal remodeling by phosphorylating several proteins including the actin regulator WAS and the microtubule-associated proteins MAP2 and MAPT. Promotes cell survival by phosphorylating AGAP2/PIKE-A and preventing its apoptotic cleavage. Participates in signal transduction pathways that regulate the integrity of the glomerular slit diaphragm (an essential part of the glomerular filter of the kidney) by phosphorylating several slit diaphragm components including NPHS1, KIRREL1 and TRPC6. Plays a role in neural processes by phosphorylating DPYSL2, a multifunctional adapter protein within the central nervous system, ARHGAP32, a regulator for Rho family GTPases implicated in various neural functions, and SNCA, a small pre-synaptic protein. Involved in reelin signaling by mediating phosphorylation of DAB1 following reelin (RELN)-binding to its receptor. Participates in the downstream signaling pathways that lead to T-cell differentiation and proliferation following T-cell receptor (TCR) stimulation. Phosphorylates PTK2B/PYK2 in response to T-cell receptor activation. Also participates in negative feedback regulation of TCR signaling through phosphorylation of PAG1, thereby promoting interaction between PAG1 and CSK and recruitment of CSK to lipid rafts. CSK maintains LCK and FYN in an inactive form. Promotes CD28-induced phosphorylation of VAV1. In mast cells, phosphorylates CLNK after activation of immunoglobulin epsilon receptor signaling. Can also promote CD244-mediated NK cell activation. This is Tyrosine-protein kinase Fyn from Bos taurus (Bovine).